We begin with the raw amino-acid sequence, 229 residues long: Somatolactin (229 aa).

A signal peptide spans 1–21 (MAALQEVLLAVLLWPVLVTIS). Intrachain disulfides connect C26–C36, C87–C203, and C220–C228. N-linked (GlcNAc...) asparagine glycosylation is present at N143.

Belongs to the somatotropin/prolactin family. As to expression, pituitary gland.

It localises to the secreted. This Tetraodon miurus (Congo puffer) protein is Somatolactin.